Here is a 241-residue protein sequence, read N- to C-terminus: Carboxy-S-adenosyl-L-methionine synthase (241 aa).

Residues Y38, 63–65, 88–89, 116–117, N131, and R198 each bind S-adenosyl-L-methionine; these read GCS, DN, and DI.

Belongs to the class I-like SAM-binding methyltransferase superfamily. Cx-SAM synthase family. In terms of assembly, homodimer.

The catalysed reaction is prephenate + S-adenosyl-L-methionine = carboxy-S-adenosyl-L-methionine + 3-phenylpyruvate + H2O. Its function is as follows. Catalyzes the conversion of S-adenosyl-L-methionine (SAM) to carboxy-S-adenosyl-L-methionine (Cx-SAM). The chain is Carboxy-S-adenosyl-L-methionine synthase from Glaesserella parasuis serovar 5 (strain SH0165) (Haemophilus parasuis).